The sequence spans 312 residues: DNA primase small subunit PriS (312 aa).

Active-site residues include Asp88, Asp90, and Asp215.

Belongs to the eukaryotic-type primase small subunit family. Heterodimer of a small subunit (PriS) and a large subunit (PriL). Requires Mg(2+) as cofactor. Mn(2+) serves as cofactor.

In terms of biological role, catalytic subunit of DNA primase, an RNA polymerase that catalyzes the synthesis of short RNA molecules used as primers for DNA polymerase during DNA replication. The small subunit contains the primase catalytic core and has DNA synthesis activity on its own. Binding to the large subunit stabilizes and modulates the activity, increasing the rate of DNA synthesis while decreasing the length of the DNA fragments, and conferring RNA synthesis capability. The DNA polymerase activity may enable DNA primase to also catalyze primer extension after primer synthesis. May also play a role in DNA repair. This is DNA primase small subunit PriS from Pyrobaculum islandicum (strain DSM 4184 / JCM 9189 / GEO3).